The primary structure comprises 105 residues: Large ribosomal subunit protein eL36 (105 aa).

It belongs to the eukaryotic ribosomal protein eL36 family. As to quaternary structure, component of the large ribosomal subunit.

It is found in the cytoplasm. The protein resides in the cytosol. In terms of biological role, component of the large ribosomal subunit. The ribosome is a large ribonucleoprotein complex responsible for the synthesis of proteins in the cell. This chain is Large ribosomal subunit protein eL36 (RPL36), found in Hydrophis hardwickii (Hardwick's spine-bellied seasnake).